The following is a 1066-amino-acid chain: MDISGGNTSRQPQKKSNQNIQVYVRVRPLNSRERCIRSAEVVDVVGPREVVTRHTLDSKLTKKFTFDRSFGPESKQCDVYSVVVSPLIEEVLNGYNCTVFAYGQTGTGKTHTMVGNETAELKSSWEDDSDIGIIPRALSHLFDELRMMEVEYTMRISYLELYNEELCDLLSTDDTTKIRIFDDSTKKGSVIIQGLEEIPVHSKDDVYKLLEKGKERRKTATTLMNAQSSRSHTVFSIVVHIRENGIEGEDMLKIGKLNLVDLAGSENVSKAGNEKGIRVRETVNINQSLLTLGRVITALVDRAPHVPYRESKLTRLLQESLGGRTKTSIIATISPGHKDIEETLSTLEYAHRAKNIQNKPEVNQKLTKKTVLKEYTEEIDKLKRDLMAARDKNGIYLAEETYGEITLKLESQNRELNEKMLLLKALKDELQNKEKIFSEVSMSLVEKTQELKKTEENLLNTKGTLLLTKKVLTKTKRRYKEKKELVASHMKTEQVLTTQAQEILAAADLATDDTHQLHGTIERRRELDEKIRRSCDQFKDRMQDNLEMIGGSLNLYQDQQAALKEQLSQEMVNSSYVSQRLALNSSKSIEMLKEMCAQSLQDQTNLHNKLIGEVMKISDQHSQAFVAKLMEQMQQQQLLMSKEIQTNLQVIEENNQRHKAMLDSMQEKFATIIDSSLQSVEEHAKQMHKKLEQLGAMSLPDAEELQNLQEELANERALAQQEDALLESMMMQMEQIKNLRSKNSISMSVHLNKMEESRLTRNHRIDDIKSGIQDYQKLGIEASQSAQAELTSQMEAGMLCLDQGVANCSMLQVHMKNLNQKYEKETNENVGSVRVHHNQVEIICQESKQQLEAVQEKTEVNLEQMVDARQQLITEDRQRFIGHATVATDLVQESNRQFSEHAEHQRQQLQICEQELVRFQQSELKTYAPTGTTPSKRDFVYPRTLVATSPHQEIVRRYRQELDWSDLDTTATIDECSEGEHDVSMHSVQELSETETIMNSTPIEPVDGVTVKRGCGTTRNSNSNALKPPVATGGKRSSSLSRSLTPSKTSPRGSPAFVRHNKENVA.

The Kinesin motor domain occupies 19–356; sequence NIQVYVRVRP…LEYAHRAKNI (338 aa). An ATP-binding site is contributed by 103–110; it reads GQTGTGKT. Residues 362–462 adopt a coiled-coil conformation; the sequence is VNQKLTKKTV…KTEENLLNTK (101 aa). Thr-520 carries the post-translational modification Phosphothreonine. 4 coiled-coil regions span residues 540-569, 639-738, 808-875, and 889-918; these read DRMQ…QLSQ, LMSK…QIKN, CSML…LITE, and DLVQ…ELVR. At Thr-933 the chain carries Phosphothreonine. Ser-949 bears the Phosphoserine mark. Positions 990-1002 are enriched in polar residues; the sequence is ELSETETIMNSTP. Disordered stretches follow at residues 990–1009 and 1016–1066; these read ELSE…VDGV and GTTR…ENVA. A compositionally biased stretch (low complexity) spans 1033–1051; sequence GGKRSSSLSRSLTPSKTSP. Ser-1043 is subject to Phosphoserine. The residue at position 1045 (Thr-1045) is a Phosphothreonine. Ser-1050 and Ser-1054 each carry phosphoserine.

The protein belongs to the TRAFAC class myosin-kinesin ATPase superfamily. Kinesin family. BimC subfamily. In terms of assembly, homotetramer. Consists of two pairs of polypeptides associated by coiled-coil interactions to form two homodimers. The homodimers are linked by lateral interactions between their coiled-coil regions to form a bipolar homotetramer consisting of a central rod with two motor domains projecting from either end. Parallel coiled coils extend from each pair of motor heads, switch to two antiparallel coiled coils in the central region and then back to parallel coiled coils. Interacts with Wee1. Phosphorylation is required for localization to mitotic spindles. Phosphorylation of Thr-933 during mitosis controls association with the spindle apparatus. Phosphorylated in vitro by Wee1.

Its subcellular location is the cytoplasm. It localises to the cytoskeleton. The protein localises to the spindle. The protein resides in the spindle pole. Functionally, important role in mitotic dividing cells. Microtubule motor required for spindle body separation. Slow plus-end directed microtubule motor capable of cross-linking and sliding apart antiparallel microtubules, thereby pushing apart the associated spindle poles during spindle assembly and function. Forms cross-links between microtubules within interpolar microtubule bundles. Contributes to the length of the metaphase spindle, maintains the prometaphase spindle by antagonizing Ncd, drives anaphase B, and also contributes to normal chromosome congression, kinetochore spacing, and anaphase A rates. Displays microtubule-stimulated ATPase activity. Required for normal fusome organization. Required in non-mitotic cells for transport of secretory proteins from the Golgi complex to the cell surface. This chain is Kinesin-like protein Klp61F, found in Drosophila melanogaster (Fruit fly).